The chain runs to 502 residues: MPKCKNLLLTSKRRKSKSKRLKLHQHEPESLFPEKEVEEEDEDEGGFKLKIAAPSQEHGVQPLGNLYFNPGAVNVRNTGLGNLQILSDELVLDILGLLGANHLGVLATVTKSFYIFANHEPLWRNLVLEELKGDFLFNGSWRSTYVAAYHPKFKFAGDGESNLKIIDFYSDYLFQSWLCANLEMKPKWLRRDNITRVRGISVEDFITKFEEPNKPVLLEGCLDGWPAIEKWSRDYLTKVVGDVEFAVGPVEMKLEKYFRYSDGAREERPLYLFDPKFAEKVPVLDSEYDVPVYFREDLFGVLGNERPDYRWIIIGPAGSGSSFHIDPNSTSAWNAVITGSKKWVLFPPDVVPPGVHPSPDGAEVACPVSIIEWFMNFYDDTKDWEKKPIECICKAGEVMFVPNGWWHLVINLEESIAITQNYASRSNLLNVLEFLKKPNAKELVSGTTDRENLHDKFKKAIEEAYPGTIQELEKKAEEAKRAEEQRVSFWDSAKTDTFKFSF.

Residues 15 to 45 (KSKSKRLKLHQHEPESLFPEKEVEEEDEDEG) are disordered. Over residues 24–35 (HQHEPESLFPEK) the composition is skewed to basic and acidic residues. The region spanning 80-126 (LGNLQILSDELVLDILGLLGANHLGVLATVTKSFYIFANHEPLWRNL) is the F-box domain. Positions 279 to 439 (EKVPVLDSEY…NVLEFLKKPN (161 aa)) constitute a JmjC domain. Fe cation-binding residues include histidine 324, aspartate 326, and histidine 407.

This sequence belongs to the JARID1 histone demethylase family. The cofactor is Fe(2+). Expressed in inflorescences, roots and siliques, and, at low levels, in leaves and stems.

It is found in the nucleus. The enzyme catalyses N(omega),N(omega)-dimethyl-L-arginyl-[protein] + 2-oxoglutarate + O2 = N(omega)-methyl-L-arginyl-[protein] + formaldehyde + succinate + CO2. In terms of biological role, histone demethylase that demethylates 'Arg-3' (H4R3me) of histone H4 with a specific activity for H4R3me2. Involved in the positive regulation of gene expression. Together with JMJ20, positively regulates seed germination by promoting the removal of repressive histone arginine methylations (e.g. H4R3me2) at GA3ox1 and GA3ox2 to trigger gibberellic acid (GA) biosynthesis. This Arabidopsis thaliana (Mouse-ear cress) protein is Arginine-specific demethylase JMJ22.